Here is a 65-residue protein sequence, read N- to C-terminus: Weak toxin CM-10 (65 aa).

5 disulfide bridges follow: Cys3-Cys24, Cys6-Cys11, Cys17-Cys42, Cys46-Cys57, and Cys58-Cys63.

This sequence belongs to the three-finger toxin family. Ancestral subfamily. Orphan group II sub-subfamily. As to expression, expressed by the venom gland.

The protein localises to the secreted. Functionally, binds with low affinity to muscular (alpha-1-beta-1-delta-epsilon/CHRNA1-CHRNB1-CHRND-CHRNE) and very low affinity to neuronal (alpha-7/CHRNA7) nicotinic acetylcholine receptor (nAChR). The chain is Weak toxin CM-10 from Naja nivea (Cape cobra).